The chain runs to 364 residues: S-adenosylmethionine:tRNA ribosyltransferase-isomerase (364 aa).

This sequence belongs to the QueA family. As to quaternary structure, monomer.

The protein localises to the cytoplasm. It carries out the reaction 7-aminomethyl-7-carbaguanosine(34) in tRNA + S-adenosyl-L-methionine = epoxyqueuosine(34) in tRNA + adenine + L-methionine + 2 H(+). The protein operates within tRNA modification; tRNA-queuosine biosynthesis. Functionally, transfers and isomerizes the ribose moiety from AdoMet to the 7-aminomethyl group of 7-deazaguanine (preQ1-tRNA) to give epoxyqueuosine (oQ-tRNA). The chain is S-adenosylmethionine:tRNA ribosyltransferase-isomerase from Bradyrhizobium sp. (strain ORS 278).